Consider the following 228-residue polypeptide: Small ribosomal subunit protein uS7A (228 aa).

The protein belongs to the universal ribosomal protein uS7 family.

This Drosophila melanogaster (Fruit fly) protein is Small ribosomal subunit protein uS7A (RpS5a).